Here is a 208-residue protein sequence, read N- to C-terminus: Small ribosomal subunit protein uS4 (208 aa).

Residues 98 to 158 (SRLDNAVYRL…EKSRNMQVID (61 aa)) enclose the S4 RNA-binding domain.

This sequence belongs to the universal ribosomal protein uS4 family. In terms of assembly, part of the 30S ribosomal subunit. Contacts protein S5. The interaction surface between S4 and S5 is involved in control of translational fidelity.

One of the primary rRNA binding proteins, it binds directly to 16S rRNA where it nucleates assembly of the body of the 30S subunit. Functionally, with S5 and S12 plays an important role in translational accuracy. This is Small ribosomal subunit protein uS4 from Desulfosudis oleivorans (strain DSM 6200 / JCM 39069 / Hxd3) (Desulfococcus oleovorans).